Here is a 500-residue protein sequence, read N- to C-terminus: Phenylalanine--tRNA ligase alpha subunit (500 aa).

Residues Thr-343, 382 to 384, and Phe-423 each bind L-phenylalanine; that span reads QID. Glu-425 lines the Mg(2+) pocket. Residue Phe-448 participates in L-phenylalanine binding.

Belongs to the class-II aminoacyl-tRNA synthetase family. Phe-tRNA synthetase alpha subunit type 2 subfamily. Tetramer of two alpha and two beta subunits. Mg(2+) serves as cofactor.

The protein resides in the cytoplasm. It carries out the reaction tRNA(Phe) + L-phenylalanine + ATP = L-phenylalanyl-tRNA(Phe) + AMP + diphosphate + H(+). The sequence is that of Phenylalanine--tRNA ligase alpha subunit from Pyrococcus abyssi (strain GE5 / Orsay).